We begin with the raw amino-acid sequence, 262 residues long: MAVGKNKRTSKGKKGGKKKVTDVFTKKEWYDLKAPKMFLVRNFGKTLVTKTIGKKLATDGLKGRIYEVNLADLNNDEDQAHKKIKLCCDHIINKDCYTDFCGLSITRDKLCSLIRKGYTLIEGYTDVKTIDNYQLRMFCIAFTKKRPNQTKTTCYAQTSQIKKIRKKMVDIMNAEASKVMLKDLVKKFIPESIGKEVEKQCKKIYPLQNVLIRKVKILKRPKLDISKLMELHTDSKEDAGKNVKSLPESKEATNILSAELKH.

This sequence belongs to the eukaryotic ribosomal protein eS1 family. Component of the small ribosomal subunit. Mature ribosomes consist of a small (40S) and a large (60S) subunit. The 40S subunit contains about 33 different proteins and 1 molecule of RNA (18S). The 60S subunit contains about 49 different proteins and 3 molecules of RNA (25S, 5.8S and 5S).

It is found in the cytoplasm. This Plasmodium vivax (strain Salvador I) protein is Small ribosomal subunit protein eS1.